A 222-amino-acid chain; its full sequence is Riboflavin kinase (222 aa).

The tract at residues 1–92 (MVEAEDLQSL…VRIFNPDQRG (92 aa)) is unknown. The tract at residues 93–222 (YTLTGTVISG…DTIEVEITHD (130 aa)) is riboflavin kinase. 102–107 (GLGEGR) lines the CDP pocket. Residues T131 and N133 each contribute to the Mg(2+) site. T188 and E196 together coordinate FMN. 201-204 (CELR) provides a ligand contact to CDP.

It belongs to the archaeal riboflavin kinase family. Requires Mg(2+) as cofactor.

It catalyses the reaction riboflavin + CTP = CDP + FMN + H(+). The protein operates within cofactor biosynthesis; FMN biosynthesis; FMN from riboflavin (CTP route): step 1/1. In terms of biological role, catalyzes the CTP-dependent phosphorylation of riboflavin (vitamin B2) to form flavin mononucleotide (FMN). The polypeptide is Riboflavin kinase (ribK) (Methanoculleus marisnigri (strain ATCC 35101 / DSM 1498 / JR1)).